Consider the following 68-residue polypeptide: Probable tautomerase jhp_0858 (68 aa).

Pro2 (proton acceptor; via imino nitrogen) is an active-site residue.

Belongs to the 4-oxalocrotonate tautomerase family.

The chain is Probable tautomerase jhp_0858 from Helicobacter pylori (strain J99 / ATCC 700824) (Campylobacter pylori J99).